A 720-amino-acid chain; its full sequence is MPSCCCLLGLGFPSPPSALRILRRRMASRAFQLRLNPLTGDSEWLVVEEEEEEDHHPTPPPKQLLATTSYLDMLNDSARNRAYRRAIEAAVTDPSSRVLDIGAGTGLLSMMAARALAAVGGETRGGSVSACESYLPMGKLMRRVLRANGMENRVKVFHKRSDELKVRDDLDSPADILVSEILDSELLGEGLIPTLQQAYDMLLAKNPKIVPYRATTYGQLVESTFLWKLHDLHNNEANAADGVWLTPGEMERIVSVKPQQHAMQCDALEDEIRLLSEPFKVFEFDFWKRPDSHREANIKIRTTRDGYVHAIISWWVLQLDSAGSIFYSTAPRWARQSSSEGPQRDMKDWCDHWKQCVWFMQGKGIPATEDQVLSLRARHNQTSISYQLNINDEACDRSSKGDHLTLLPERIALYGDKDWRSALINTIKNALTVKSSPTCVVADDSMFLALLISSMSPTSKVIAMYPGLRDKGAAYLRSVADANNFSIDQIQVIGKRASSITADDLKHKKVNLLVGEPFYLGSEGMLPWQNLRFWSVRTLLDSMLSEDAFIMPCKGILKLCAMSLPDLWRSRSSLKDVEGFDHSVVNETLGACGCLPGDQQGPCLPYYVWQCGYTKKLSKVYSLMDFNFSEPIHSCFGKTKIEFSHDGTCHGFAVWIDWVLDERKSVVLTTGPDNRYWKQGVQLFSKPVEVNPGKSVMHVEASFDPSTGEITFSSSSTTCS.

SAM-dependent MTase PRMT-type domains follow at residues 54-385 (DHHP…TSIS) and 387-720 (QLNI…TTCS). Active-site residues include Glu-180 and Glu-189.

Belongs to the class I-like SAM-binding methyltransferase superfamily. Protein arginine N-methyltransferase family. PRMT7 subfamily.

Its function is as follows. Arginine methyltransferase that can both catalyze the formation of omega-N monomethylarginine (MMA) and symmetrical dimethylarginine (sDMA). This is Protein arginine N-methyltransferase 7 (PRMT7) from Oryza sativa subsp. japonica (Rice).